A 322-amino-acid chain; its full sequence is Lipoyl synthase (322 aa).

Residues 1-25 are compositionally biased toward basic and acidic residues; the sequence is MSQRITIDHRSAPALRHPEKAHRPD. Residues 1–29 are disordered; sequence MSQRITIDHRSAPALRHPEKAHRPDNPIQ. [4Fe-4S] cluster-binding residues include Cys-61, Cys-66, Cys-72, Cys-87, Cys-91, Cys-94, and Ser-300. The Radical SAM core domain occupies 73 to 289; that stretch reads WSQRHATMMI…AAAARSKGFL (217 aa).

This sequence belongs to the radical SAM superfamily. Lipoyl synthase family. The cofactor is [4Fe-4S] cluster.

The protein resides in the cytoplasm. The enzyme catalyses [[Fe-S] cluster scaffold protein carrying a second [4Fe-4S](2+) cluster] + N(6)-octanoyl-L-lysyl-[protein] + 2 oxidized [2Fe-2S]-[ferredoxin] + 2 S-adenosyl-L-methionine + 4 H(+) = [[Fe-S] cluster scaffold protein] + N(6)-[(R)-dihydrolipoyl]-L-lysyl-[protein] + 4 Fe(3+) + 2 hydrogen sulfide + 2 5'-deoxyadenosine + 2 L-methionine + 2 reduced [2Fe-2S]-[ferredoxin]. It functions in the pathway protein modification; protein lipoylation via endogenous pathway; protein N(6)-(lipoyl)lysine from octanoyl-[acyl-carrier-protein]: step 2/2. Catalyzes the radical-mediated insertion of two sulfur atoms into the C-6 and C-8 positions of the octanoyl moiety bound to the lipoyl domains of lipoate-dependent enzymes, thereby converting the octanoylated domains into lipoylated derivatives. This Gluconobacter oxydans (strain 621H) (Gluconobacter suboxydans) protein is Lipoyl synthase.